An 835-amino-acid chain; its full sequence is Telomere length regulation protein TEL2 homolog (835 aa).

Disordered stretches follow at residues 455 to 501 (SADC…LAPY) and 629 to 648 (LSHE…HSIR). The segment covering 464–473 (ESSPSKSCPK) has biased composition (low complexity). Residues 474–486 (AIEKSKMEAKADQ) show a composition bias toward basic and acidic residues. The span at 488 to 499 (SDSELDSDDDLA) shows a compositional bias: acidic residues. Positions 636-648 (ESRSTGTGQHSIR) are enriched in polar residues.

The protein belongs to the TEL2 family.

The protein localises to the cytoplasm. It localises to the membrane. Its subcellular location is the nucleus. It is found in the chromosome. The protein resides in the telomere. Regulator of the DNA damage response (DDR). Part of the TTT complex that is required to stabilize protein levels of the phosphatidylinositol 3-kinase-related protein kinase (PIKK) family proteins. Promotes assembly, stabilizes and maintains the activity of TORC complexes, which regulate cell growth and survival in response to nutrient and hormonal signals. May be involved in telomere length regulation. The chain is Telomere length regulation protein TEL2 homolog (telo2) from Xenopus laevis (African clawed frog).